The primary structure comprises 300 residues: N-acetylmannosamine kinase (300 aa).

Residues Ala5–Lys12 and Gly132–Leu139 each bind ATP. The Zn(2+) site is built by His156, Cys166, Cys168, and Cys173.

This sequence belongs to the ROK (NagC/XylR) family. NanK subfamily. As to quaternary structure, homodimer.

It carries out the reaction an N-acyl-D-mannosamine + ATP = an N-acyl-D-mannosamine 6-phosphate + ADP + H(+). It functions in the pathway amino-sugar metabolism; N-acetylneuraminate degradation; D-fructose 6-phosphate from N-acetylneuraminate: step 2/5. Functionally, catalyzes the phosphorylation of N-acetylmannosamine (ManNAc) to ManNAc-6-P. The polypeptide is N-acetylmannosamine kinase (Haemophilus influenzae (strain 86-028NP)).